Here is a 356-residue protein sequence, read N- to C-terminus: Ferrochelatase (356 aa).

The Fe cation site is built by His214 and Glu295.

This sequence belongs to the ferrochelatase family.

It localises to the cytoplasm. It catalyses the reaction heme b + 2 H(+) = protoporphyrin IX + Fe(2+). Its pathway is porphyrin-containing compound metabolism; protoheme biosynthesis; protoheme from protoporphyrin-IX: step 1/1. Catalyzes the ferrous insertion into protoporphyrin IX. The chain is Ferrochelatase from Paraburkholderia phytofirmans (strain DSM 17436 / LMG 22146 / PsJN) (Burkholderia phytofirmans).